Here is a 301-residue protein sequence, read N- to C-terminus: Homoserine O-acetyltransferase (301 aa).

Residue cysteine 142 is the Acyl-thioester intermediate of the active site. Residues lysine 163 and serine 192 each coordinate substrate. The active-site Proton acceptor is the histidine 235. The active site involves glutamate 237. Arginine 249 provides a ligand contact to substrate.

The protein belongs to the MetA family.

The protein localises to the cytoplasm. The enzyme catalyses L-homoserine + acetyl-CoA = O-acetyl-L-homoserine + CoA. It participates in amino-acid biosynthesis; L-methionine biosynthesis via de novo pathway; O-acetyl-L-homoserine from L-homoserine: step 1/1. Functionally, transfers an acetyl group from acetyl-CoA to L-homoserine, forming acetyl-L-homoserine. The protein is Homoserine O-acetyltransferase of Bacillus cereus (strain B4264).